Consider the following 353-residue polypeptide: 6-phosphogluconolactonase (353 aa).

It belongs to the cycloisomerase 2 family.

The protein localises to the cytoplasm. The enzyme catalyses 6-phospho-D-glucono-1,5-lactone + H2O = 6-phospho-D-gluconate + H(+). It functions in the pathway carbohydrate degradation; pentose phosphate pathway; D-ribulose 5-phosphate from D-glucose 6-phosphate (oxidative stage): step 2/3. Its function is as follows. Carboxylic ester hydrolase that may be involved in ulvan degradation. Ulvan is the main polysaccharide component of the Ulvales (green seaweed) cell wall. It is composed of disaccharide building blocks comprising 3-sulfated rhamnose (Rha3S) linked to D-glucuronic acid (GlcA), L-iduronic acid (IduA), or D-xylose (Xyl). Catalyzes the hydrolysis of 6-phosphogluconolactone to 6-phosphogluconate. The sequence is that of 6-phosphogluconolactonase (pgl) from Formosa agariphila (strain DSM 15362 / KCTC 12365 / LMG 23005 / KMM 3901 / M-2Alg 35-1).